The following is a 434-amino-acid chain: Enolase (434 aa).

(2R)-2-phosphoglycerate is bound at residue Gln-163. Catalysis depends on Glu-205, which acts as the Proton donor. Residues Asp-242, Glu-291, and Asp-318 each contribute to the Mg(2+) site. Lys-343, Arg-372, Ser-373, and Lys-394 together coordinate (2R)-2-phosphoglycerate. Catalysis depends on Lys-343, which acts as the Proton acceptor.

This sequence belongs to the enolase family. It depends on Mg(2+) as a cofactor.

It is found in the cytoplasm. The protein localises to the secreted. It localises to the cell surface. The enzyme catalyses (2R)-2-phosphoglycerate = phosphoenolpyruvate + H2O. It functions in the pathway carbohydrate degradation; glycolysis; pyruvate from D-glyceraldehyde 3-phosphate: step 4/5. In terms of biological role, catalyzes the reversible conversion of 2-phosphoglycerate (2-PG) into phosphoenolpyruvate (PEP). It is essential for the degradation of carbohydrates via glycolysis. The polypeptide is Enolase (Streptococcus thermophilus (strain ATCC BAA-491 / LMD-9)).